The primary structure comprises 1064 residues: WD repeat-containing protein on Y chromosome (1064 aa).

WD repeat units follow at residues 153–197, 326–365, 369–408, 459–498, 511–550, 598–638, 746–785, and 827–866; these read EEVT…IRTA, RVPL…EPSA, GHNG…LLQT, THAA…RKII, IIDI…VVRN, FHTD…RRYS, KTGD…EAEK, and AHLK…LGTL. The span at 914-924 shows a compositional bias: basic and acidic residues; the sequence is PAKRAEVKAPE. 2 disordered regions span residues 914-935 and 1023-1064; these read PAKR…QTDD and GSAL…QQSE. Residues 925–935 are compositionally biased toward acidic residues; the sequence is DRDEETAQTDD.

In Drosophila pseudoobscura pseudoobscura (Fruit fly), this protein is WD repeat-containing protein on Y chromosome.